Consider the following 93-residue polypeptide: Large ribosomal subunit protein eL31 (93 aa).

The protein belongs to the eukaryotic ribosomal protein eL31 family.

This Methanosarcina mazei (strain ATCC BAA-159 / DSM 3647 / Goe1 / Go1 / JCM 11833 / OCM 88) (Methanosarcina frisia) protein is Large ribosomal subunit protein eL31.